The sequence spans 267 residues: 2-keto-3-deoxy-L-rhamnonate aldolase (267 aa).

His49 (proton acceptor) is an active-site residue. Substrate is bound at residue Gln151. Mg(2+) is bound at residue Glu153. Positions 178 and 179 each coordinate substrate. Position 179 (Asp179) interacts with Mg(2+).

The protein belongs to the HpcH/HpaI aldolase family. KDR aldolase subfamily. As to quaternary structure, homohexamer. It depends on Mg(2+) as a cofactor.

The enzyme catalyses 2-dehydro-3-deoxy-L-rhamnonate = (S)-lactaldehyde + pyruvate. In terms of biological role, catalyzes the reversible retro-aldol cleavage of 2-keto-3-deoxy-L-rhamnonate (KDR) to pyruvate and lactaldehyde. This chain is 2-keto-3-deoxy-L-rhamnonate aldolase, found in Shigella dysenteriae serotype 1 (strain Sd197).